We begin with the raw amino-acid sequence, 225 residues long: Protein-L-isoaspartate O-methyltransferase (225 aa).

Ser-63 is an active-site residue.

It belongs to the methyltransferase superfamily. L-isoaspartyl/D-aspartyl protein methyltransferase family.

It localises to the cytoplasm. The enzyme catalyses [protein]-L-isoaspartate + S-adenosyl-L-methionine = [protein]-L-isoaspartate alpha-methyl ester + S-adenosyl-L-homocysteine. In terms of biological role, catalyzes the methyl esterification of L-isoaspartyl residues in peptides and proteins that result from spontaneous decomposition of normal L-aspartyl and L-asparaginyl residues. It plays a role in the repair and/or degradation of damaged proteins. The chain is Protein-L-isoaspartate O-methyltransferase from Staphylothermus marinus (strain ATCC 43588 / DSM 3639 / JCM 9404 / F1).